The sequence spans 469 residues: DNA-binding transcriptional regulator NtrC (469 aa).

A Response regulatory domain is found at 5–119 (IVWVVDDDSS…EAVALVERAI (115 aa)). At Asp-54 the chain carries 4-aspartylphosphate. Residues 140–369 (MIGEAPAMQD…LENTCRWLTV (230 aa)) form the Sigma-54 factor interaction domain. Residues 168-175 (GESGTGKE) and 231-240 (ADGGTLFLDE) contribute to the ATP site. The H-T-H motif DNA-binding region spans 445-464 (KQEAARLLGWGRNTLTRKLK).

In terms of processing, phosphorylated and dephosphorylated by NtrB.

It localises to the cytoplasm. In terms of biological role, member of the two-component regulatory system NtrB/NtrC, which controls expression of the nitrogen-regulated (ntr) genes in response to nitrogen limitation. Phosphorylated NtrC binds directly to DNA and stimulates the formation of open promoter-sigma54-RNA polymerase complexes. The sequence is that of DNA-binding transcriptional regulator NtrC (glnG) from Salmonella typhimurium (strain LT2 / SGSC1412 / ATCC 700720).